Reading from the N-terminus, the 233-residue chain is 5-demethoxyubiquinone hydroxylase, mitochondrial (233 aa).

The transit peptide at 1–15 directs the protein to the mitochondrion; the sequence is MLSRVSVFKPASRGF. Residues serine 20 and serine 28 each carry the phosphoserine modification. At threonine 32 the chain carries Phosphothreonine. Glutamate 63, glutamate 95, histidine 98, glutamate 147, glutamate 194, and histidine 197 together coordinate Fe cation.

It belongs to the COQ7 family. Component of a multi-subunit COQ enzyme complex, composed of at least COQ3, COQ4, COQ5, COQ6, COQ7 and COQ9. It depends on Fe cation as a cofactor. Post-translationally, phosphorylated. Dephosphorylated by PTC7; dephosphorylation is essential for enzyme activation.

It is found in the mitochondrion inner membrane. The enzyme catalyses a 5-methoxy-2-methyl-3-(all-trans-polyprenyl)benzene-1,4-diol + AH2 + O2 = a 3-demethylubiquinol + A + H2O. The catalysed reaction is a 5-methoxy-2-methyl-3-(all-trans-polyprenyl)benzoquinone + NADH + O2 = a 3-demethylubiquinone + NAD(+) + H2O. Its pathway is cofactor biosynthesis; ubiquinone biosynthesis. Dephosphorylation by PTC7 leads to activation. Its function is as follows. Catalyzes the hydroxylation of 2-hexaprenyl-3-methyl-6-methoxy-1,4-benzoquinol (DMQH2) during ubiquinone biosynthesis. Also catalyzes the hydroxylation of the 5-methoxy-2-methyl-3-(all-trans-polyprenyl)benzoquinone at the C6 position and participates in the biosynthesis of ubiquinone. Also has a structural role in the COQ enzyme complex, stabilizing COQ3 and COQ4 polypeptides. This chain is 5-demethoxyubiquinone hydroxylase, mitochondrial, found in Saccharomyces cerevisiae (strain ATCC 204508 / S288c) (Baker's yeast).